Here is an 814-residue protein sequence, read N- to C-terminus: Probable G-protein coupled receptor 156 (814 aa).

The Extracellular portion of the chain corresponds to 1 to 47; the sequence is MEPEINCSELCDSFPGQELDRRPLHDLCKTTITSSHHSSKTISSLSP. A glycan (N-linked (GlcNAc...) asparagine) is linked at N6. A helical transmembrane segment spans residues 48 to 68; that stretch reads VLLGIVWTFLSCGLLLILFFL. The Cytoplasmic segment spans residues 69–86; that stretch reads AFTIHCRKNRIVKMSSPN. Residues 87–107 form a helical membrane-spanning segment; that stretch reads LNIVTLLGSCLTYSSAYLFGI. Over 108-118 the chain is Extracellular; the sequence is QDVLVGSSMET. Residues 119 to 139 traverse the membrane as a helical segment; the sequence is LIQTRLSMLCIGTSLVFGPIL. Topologically, residues 140–164 are cytoplasmic; the sequence is GKSWRLYKVFTQRVPDKRVIIKDLQ. The helical transmembrane segment at 165-185 threads the bilayer; the sequence is LLGLVAALLMADVILLMTWVL. Residues 186–222 are Extracellular-facing; the sequence is TDPIQCLQILSVSMTVTGKDVSCTSTSTHFCASRYSD. The helical transmembrane segment at 223–243 threads the bilayer; that stretch reads VWIALIWGCKGLLLLYGAYLA. Over 244-257 the chain is Cytoplasmic; it reads GLTGHVSSPPVNQS. A helical transmembrane segment spans residues 258-278; the sequence is LTIMVGVNLLVLAAGLLFVVT. Over 279–288 the chain is Extracellular; that stretch reads RYLHSWPNLV. The helical transmembrane segment at 289–309 threads the bilayer; the sequence is FGLTSGGIFVCTTTINCFIFI. Residues 310-814 are Cytoplasmic-facing; the sequence is PQLKQWKAFE…FKDDLKPTLV (505 aa). Residues 354–390 adopt a coiled-coil conformation; that stretch reads EKSSMERLLTEKNAVIESLQEQVNNAKEKIVRLMSAE. Disordered regions lie at residues 422–545, 557–724, and 769–792; these read AQGP…SSVI, GLGP…PEQW, and SSSDSSDSGTSDTDPEPTGGLASW. Over residues 443–454 the composition is skewed to polar residues; sequence SQCTSGPSSYAQ. Basic and acidic residues predominate over residues 468-484; the sequence is GKEEKISDSKDFSDHLD. The segment covering 486-496 has biased composition (polar residues); sequence GCSQKPWTEQS. A compositionally biased stretch (basic and acidic residues) spans 523 to 545; it reads QRQRHLENSEEPPERRSRVSSVI. The segment covering 563–581 has biased composition (polar residues); sequence SLSTAPSCHQQTWKNSAAF. Basic residues predominate over residues 599-610; the sequence is VRRRRAAQRARS. Residues 639-651 are compositionally biased toward polar residues; it reads NGDSPSLAPQTTD. The span at 769-780 shows a compositional bias: low complexity; that stretch reads SSSDSSDSGTSD.

The protein belongs to the G-protein coupled receptor 3 family. GABA-B receptor subfamily. Ubiquitous expression both in the CNS and in peripheral tissues. Very high expression in fetal brain and testis relative to expression in other tissues.

The protein localises to the cell membrane. In terms of biological role, orphan G-protein coupled receptor involved in the regulation of hair cell orientation in mechanosensory organs of the inner ear. It is required to trigger a 180 degree reversal in hair cell orientation, creating a virtual line of polarity reversal (LPR) across which stereociliary bundles are arranged in opposite orientations. In Homo sapiens (Human), this protein is Probable G-protein coupled receptor 156 (GPR156).